The chain runs to 456 residues: Enolase (456 aa).

Gln167 lines the (2R)-2-phosphoglycerate pocket. The Proton donor role is filled by Glu209. The Mg(2+) site is built by Asp250, Glu312, and Asp339. (2R)-2-phosphoglycerate-binding residues include Lys364, Arg393, Ser394, and Lys415. Lys364 (proton acceptor) is an active-site residue.

This sequence belongs to the enolase family. The cofactor is Mg(2+).

The protein resides in the cytoplasm. Its subcellular location is the secreted. It is found in the cell surface. It catalyses the reaction (2R)-2-phosphoglycerate = phosphoenolpyruvate + H2O. It functions in the pathway carbohydrate degradation; glycolysis; pyruvate from D-glyceraldehyde 3-phosphate: step 4/5. Functionally, catalyzes the reversible conversion of 2-phosphoglycerate (2-PG) into phosphoenolpyruvate (PEP). It is essential for the degradation of carbohydrates via glycolysis. The chain is Enolase from Mycoplasmopsis pulmonis (strain UAB CTIP) (Mycoplasma pulmonis).